We begin with the raw amino-acid sequence, 358 residues long: Phosphoribosyl pyrophosphate synthase-associated protein 2 (358 aa).

This sequence belongs to the ribose-phosphate pyrophosphokinase family.

Functionally, seems to play a negative regulatory role in 5-phosphoribose 1-diphosphate synthesis. The sequence is that of Phosphoribosyl pyrophosphate synthase-associated protein 2 (prpsap2) from Xenopus tropicalis (Western clawed frog).